Consider the following 346-residue polypeptide: Anthranilate phosphoribosyltransferase (346 aa).

5-phospho-alpha-D-ribose 1-diphosphate is bound by residues glycine 88, glycine 91–aspartate 92, threonine 96, asparagine 98–threonine 101, lysine 116–serine 124, and alanine 128. Glycine 88 is a binding site for anthranilate. Serine 100 is a binding site for Mg(2+). Residue asparagine 119 coordinates anthranilate. Arginine 174 provides a ligand contact to anthranilate. Mg(2+)-binding residues include aspartate 233 and glutamate 234.

The protein belongs to the anthranilate phosphoribosyltransferase family. Homodimer. Mg(2+) serves as cofactor.

It carries out the reaction N-(5-phospho-beta-D-ribosyl)anthranilate + diphosphate = 5-phospho-alpha-D-ribose 1-diphosphate + anthranilate. It functions in the pathway amino-acid biosynthesis; L-tryptophan biosynthesis; L-tryptophan from chorismate: step 2/5. In terms of biological role, catalyzes the transfer of the phosphoribosyl group of 5-phosphorylribose-1-pyrophosphate (PRPP) to anthranilate to yield N-(5'-phosphoribosyl)-anthranilate (PRA). This Paramagnetospirillum magneticum (strain ATCC 700264 / AMB-1) (Magnetospirillum magneticum) protein is Anthranilate phosphoribosyltransferase.